The following is a 368-amino-acid chain: MAEKKSQKNTPVKQIDPEQKEKALAAALAQIEKQFGKGSIMKLGDTQALDIEAVSTGSLGLDSALGIGGLPMGRIVEIYGPESSGKTTLTLSVVAQAQKNGKTCAFIDAEHALDPIYARKLGVDTDGLLISQPDNGEQALEICDALVRSGAVDVIIVDSVAALTPKAEIEGDMGDSHMGLQARLMSQALRKLTANIKATNCLVIFINQIRMKIGVMFGNPETTTGGNALKFYASVRLDIRRSGVVKDGDEVIGSETKVKIVKNKVAPPFREVQFDIMYGEGIARMNELLILAESHGFINKAGAWFSYEGEKIGQGKNNAIKWLKEHPEVASKIEQDIRNLLISNPTFTATPDSENADNADDEFSEEEL.

Position 80–87 (Gly-80–Thr-87) interacts with ATP. The segment covering Asn-344–Ser-353 has biased composition (polar residues). The interval Asn-344 to Leu-368 is disordered. Acidic residues predominate over residues Glu-354–Leu-368.

Belongs to the RecA family.

The protein resides in the cytoplasm. In terms of biological role, can catalyze the hydrolysis of ATP in the presence of single-stranded DNA, the ATP-dependent uptake of single-stranded DNA by duplex DNA, and the ATP-dependent hybridization of homologous single-stranded DNAs. It interacts with LexA causing its activation and leading to its autocatalytic cleavage. The polypeptide is Protein RecA (Mannheimia haemolytica (Pasteurella haemolytica)).